A 606-amino-acid polypeptide reads, in one-letter code: MATKDPTAVERANLLNMAKLSIKGLIESALSFGRTLDSDYPPLQQFFVVMEHCLKHGLKVRKSFLSYNKTIWGPLELVEKLYPEAEEIGASVRDLPGLKTPLGRARAWLRLALMQKKMADYLRCLIIQRDLLSEFYEYHALMMEEEGAVIVGLLVGLNVIDANLCVKGEDLDSQVGVIDFSMYLKNEEDIGNKERNVQIAAILDQKNYVEELNRQLNSTVSSLHSRVDSLEKSNTKLIEELAIAKNNIIKLQEENHQLRSENKLILMKTQQHLEVTKVDVETELQTYKHSRQGLDEMYNEARRQLRDESQLRQDVENELAVQVSMKHEIELAMKLLEKDIHEKQDTLIGLRQQLEEVKAINIEMYQKLQGSEDGLKEKNEIIARLEEKTNKITAAMRQLEQRLQQAEKAQMEAEDEDEKYLQECLSKSDSLQKQISQKEKQLVQLETDLKIEKEWRQTLQEDLQKEKDALSHLRNETQQIISLKKEFLNLQDENQQLKKIYHEQEQALQELGNKLSESKLKIEDIKEANKALQGLVWLKDKEATHCKLCEKEFSLSKRKHHCRNCGEIFCNACSDNELPLPSSPKPVRVCDSCHALLIQRCSSNLP.

The 133-residue stretch at 37–169 (DSDYPPLQQF…IDANLCVKGE (133 aa)) folds into the RUN domain. A coiled-coil region spans residues 210-534 (EELNRQLNST…IKEANKALQG (325 aa)). Residues 540–598 (DKEATHCKLCEKEFSLSKRKHHCRNCGEIFCNACSDNELPLPSSPKPVRVCDSCHALLI) form an FYVE-type zinc finger. Zn(2+)-binding residues include Cys-546, Cys-549, Cys-562, Cys-565, Cys-570, Cys-573, Cys-590, and Cys-593.

In terms of assembly, interacts with BMX. In terms of tissue distribution, expressed in brain, lung and testis.

It is found in the nucleus. This is RUN and FYVE domain-containing protein 2 (RUFY2) from Homo sapiens (Human).